We begin with the raw amino-acid sequence, 634 residues long: MAKVVGIDLGTTNSCVAVMEGGKPTVIANAEGFRTTPSVVAFAKNQDRLVGQIAKRQAVMNPENTFYSVKRFIGRRPDEVTNELTEVAYKVDTSGNAVKLDSSNAGKQFAPEEISAQVLRKLAEDASKYLGETVTQAVITVPAYFNDSQRQATKDAGKIAGLEVLRIINEPTAAALAYGLDKKSNERILVFDLGGGTFDVSVLEVGDGVFEVLATSGDTHLGGDDFDKKIVDFLAGEFQKNEGIDLRKDKQALQRLTEAAEKAKIELSSATQTEINLPFITATQDGPKHLDLTLTRAKFEELASDLIDRCRIPVEQAIKDAKLALSEIDEIVLVGGSTRIPAVQAIVKQMTGKEPNQSVNPDEVVAIGAAIQGGVLAGEVKDILLLDVTPLSLGVETLGGVMTKLIPRNTTIPTKKSETFSTAADGQTNVEIHVLQGEREMASDNKSLGTFRLDGIPPAPRGVPQIEVIFDIDANGILNVTAKDKGSGKEQSISITGASTLSDNEVDRMVKDAEANAAADKERRERIDLKNQADTLVYQSEKQLSELGDKISADEKSKVEGFIQELKDALAAEDYDKIKSIIEQLQQALYAAGSSVYQQASAEASANAQAGPSSSSSSSSGDDDVIDAEFSESK.

At threonine 197 the chain carries Phosphothreonine; by autocatalysis. The span at 601-620 (SAEASANAQAGPSSSSSSSS) shows a compositional bias: low complexity. The disordered stretch occupies residues 601–634 (SAEASANAQAGPSSSSSSSSGDDDVIDAEFSESK). Residues 621–634 (GDDDVIDAEFSESK) are compositionally biased toward acidic residues.

This sequence belongs to the heat shock protein 70 family.

Acts as a chaperone. The chain is Chaperone protein dnaK2 (dnaK2) from Synechococcus elongatus (strain ATCC 33912 / PCC 7942 / FACHB-805) (Anacystis nidulans R2).